The following is a 420-amino-acid chain: 5'-deoxyadenosine deaminase (420 aa).

2 residues coordinate Zn(2+): His-55 and His-57. Substrate is bound by residues Glu-84 and His-176. His-203 is a binding site for Zn(2+). Residues Glu-206 and Asp-292 each contribute to the substrate site. Asp-292 lines the Zn(2+) pocket.

It belongs to the metallo-dependent hydrolases superfamily. MTA/SAH deaminase family. As to quaternary structure, homotetramer. Requires Zn(2+) as cofactor.

It carries out the reaction 5'-deoxyadenosine + H2O + H(+) = 5'-deoxyinosine + NH4(+). The enzyme catalyses S-adenosyl-L-homocysteine + H2O + H(+) = S-inosyl-L-homocysteine + NH4(+). It catalyses the reaction S-methyl-5'-thioadenosine + H2O + H(+) = S-methyl-5'-thioinosine + NH4(+). The catalysed reaction is adenosine + H2O + H(+) = inosine + NH4(+). The protein operates within amino-acid biosynthesis; S-adenosyl-L-methionine biosynthesis. Functionally, catalyzes the deamination of three SAM-derived enzymatic products, namely 5'-deoxyadenosine, S-adenosyl-L-homocysteine, and 5'-methylthioadenosine, to produce the inosine analogs. Can also deaminate adenosine. The preferred substrate for this enzyme is 5'-deoxyadenosine, but all these substrates are efficiently deaminated. Likely functions in a S-adenosyl-L-methionine (SAM) recycling pathway from S-adenosyl-L-homocysteine (SAH) produced from SAM-dependent methylation reactions. May also be involved in the recycling of 5'-deoxyadenosine, whereupon the 5'-deoxyribose moiety of 5'-deoxyinosine is further metabolized to deoxyhexoses used for the biosynthesis of aromatic amino acids in methanogens. The protein is 5'-deoxyadenosine deaminase of Methanocaldococcus jannaschii (strain ATCC 43067 / DSM 2661 / JAL-1 / JCM 10045 / NBRC 100440) (Methanococcus jannaschii).